A 1020-amino-acid chain; its full sequence is C2 and GRAM domain-containing protein At1g03370 (1020 aa).

Residues 1-102 form the C2 1 domain; it reads MKLQVRVVEA…ENQSLGTVWY (102 aa). Ca(2+)-binding residues include D17, D23, D69, D71, and D77. Polar residues-rich tracts occupy residues 134-144 and 158-172; these read TSSGDQTSASR and TCAS…SSIP. The tract at residues 134–172 is disordered; the sequence is TSSGDQTSASRSPDLRLESPIDPSTCASPSRSDDASSIP. The 173-residue stretch at 249–421 folds into the VASt 1 domain; that stretch reads SGGVVVDQLF…LLAQSVKPVD (173 aa). Residues 454–474 form a helical membrane-spanning segment; sequence FTVLSTFLIGIYVFVHIVFAI. Residues 517–635 form the C2 2 domain; that stretch reads QARKQKGSDH…NISDLADVWV (119 aa). Ca(2+)-binding residues include D551, D557, D604, F605, and D606. Residues 689–752 enclose the GRAM domain; that stretch reads AFQKLFGLPQ…LWEDIEEIQV (64 aa). Positions 848–1010 constitute a VASt 2 domain; it reads RFSEVFSLTL…MTFGFLEKEY (163 aa).

The cofactor is Ca(2+).

Its subcellular location is the membrane. The protein is C2 and GRAM domain-containing protein At1g03370 of Arabidopsis thaliana (Mouse-ear cress).